The primary structure comprises 185 residues: ATP synthase subunit delta, chloroplastic (185 aa).

It belongs to the ATPase delta chain family. F-type ATPases have 2 components, F(1) - the catalytic core - and F(0) - the membrane proton channel. F(1) has five subunits: alpha(3), beta(3), gamma(1), delta(1), epsilon(1). CF(0) has four main subunits: a(1), b(1), b'(1) and c(10-14). The alpha and beta chains form an alternating ring which encloses part of the gamma chain. F(1) is attached to F(0) by a central stalk formed by the gamma and epsilon chains, while a peripheral stalk is formed by the delta, b and b' chains.

It localises to the plastid. The protein localises to the chloroplast thylakoid membrane. F(1)F(0) ATP synthase produces ATP from ADP in the presence of a proton or sodium gradient. F-type ATPases consist of two structural domains, F(1) containing the extramembraneous catalytic core and F(0) containing the membrane proton channel, linked together by a central stalk and a peripheral stalk. During catalysis, ATP synthesis in the catalytic domain of F(1) is coupled via a rotary mechanism of the central stalk subunits to proton translocation. Functionally, this protein is part of the stalk that links CF(0) to CF(1). It either transmits conformational changes from CF(0) to CF(1) or is implicated in proton conduction. In Guillardia theta (Cryptophyte), this protein is ATP synthase subunit delta, chloroplastic.